The primary structure comprises 331 residues: Probable zinc-binding oxidoreductase, mitochondrial (331 aa).

Residues 1 to 29 (MASVTSVPKTGRSVNQDVPATTLTLQTRP) are compositionally biased toward polar residues. Residues 1 to 34 (MASVTSVPKTGRSVNQDVPATTLTLQTRPTPAPN) form a disordered region.

Belongs to the zinc-containing alcohol dehydrogenase family. Quinone oxidoreductase subfamily.

The protein localises to the mitochondrion. This chain is Probable zinc-binding oxidoreductase, mitochondrial, found in Arthroderma benhamiae (strain ATCC MYA-4681 / CBS 112371) (Trichophyton mentagrophytes).